The sequence spans 85 residues: Small ribosomal subunit protein bS18c (85 aa).

This sequence belongs to the bacterial ribosomal protein bS18 family. In terms of assembly, part of the 30S ribosomal subunit.

Its subcellular location is the plastid. It is found in the chloroplast. The sequence is that of Small ribosomal subunit protein bS18c from Tupiella akineta (Green alga).